The primary structure comprises 695 residues: Solute carrier family 53 member 1 (695 aa).

Topologically, residues 1 to 228 (MKFAEHLSAH…RVPPLGAAQP (228 aa)) are cytoplasmic. The SPX domain maps to 2–224 (KFAEHLSAHI…MKRLRVPPLG (223 aa)). The interval 158–165 (KILKKHDK) is important for inositol polyphosphate binding. Residues 229–259 (APAWTTFRVGLFCGIFIVLNITLVFAAVFKL) form a helical membrane-spanning segment. Residues 260 to 264 (ETDRT) lie on the Extracellular side of the membrane. The chain crosses the membrane as a helical span at residues 265–296 (VWPLIRIYRGGFLLIEFLFLLGINTYGWRQAG). The Cytoplasmic segment spans residues 297 to 309 (VNHVLIFELNPRN). A helical transmembrane segment spans residues 310–337 (NLSHQHLFEIAGFLGILWCLSLLACFFA). The Extracellular portion of the chain corresponds to 338-343 (PISIIP). Residues 344–365 (IYVYPLALYGFMVFFLINPTKT) traverse the membrane as a helical segment. Positions 366–383 (FYYKSRFWLLKLLFRVFT) form an intramembrane region, helical. Residues 384–388 (APFHK) are Cytoplasmic-facing. The chain crosses the membrane as a discontinuously helical span at residues 389–422 (VGFADFWLADQLNSLSVILMDLEYMICFYSFELK). The phosphate site is built by aspartate 398 and asparagine 401. Topologically, residues 423-429 (WDESKGL) are extracellular. Residues 430-471 (LPNDPQEPEFCHKYSYGVRAIVQCIPAWLRFIQCLRRYRDTR) form a discontinuously helical membrane-spanning segment. Residues 439–642 (FCHKYSYGVR…LNADDQTLLE (204 aa)) form the EXS domain. A topological domain (cytoplasmic) is located at residue arginine 472. Residues 473–503 (AFPHLVNAGKYSTTFFTVTFAALYSTHEEQN) traverse the membrane as a helical segment. 2 residues coordinate phosphate: lysine 482 and tyrosine 483. Over 504 to 506 (HSD) the chain is Extracellular. The helical transmembrane segment at 507–534 (TVVFFYLWVFFCIISSCYTLIWDLKMDW) threads the bilayer. The Cytoplasmic portion of the chain corresponds to 535 to 553 (GLFDKNAGENTFLREEIVY). The discontinuously helical transmembrane segment at 554 to 584 (PQKAYYYCAIIEDVILRFAWTIQISITATFK) threads the bilayer. Phosphate is bound at residue arginine 570. Over 585–586 (PH) the chain is Extracellular. The helical transmembrane segment at 587-625 (VGNIIATVFAPLEVFRRFVWNFFRLENEHLNNCGEFRAV) threads the bilayer. 2 residues coordinate phosphate: arginine 602 and arginine 603. The Cytoplasmic segment spans residues 626 to 695 (RDISVAPLNA…IEDTDDEANT (70 aa)). The residue at position 667 (serine 667) is a Phosphoserine. The disordered stretch occupies residues 671–695 (PRLASQSKARDTKVLIEDTDDEANT). Phosphothreonine is present on threonine 689.

It belongs to the SYG1 (TC 2.A.94) family. In terms of assembly, homodimer. In terms of tissue distribution, expressed in pancreatic islets.

The protein localises to the cell membrane. The enzyme catalyses phosphate(in) = phosphate(out). Inorganic ion transporter that mediates phosphate ion export across plasma membrane. Plays a major role in phosphate homeostasis, preventing intracellular phosphate accumulation and possible calcium phosphate precipitation, ultimately preserving calcium signaling. Binds inositol hexakisphosphate (Ins6P) and similar inositol polyphosphates, such as 5-diphospho-inositol pentakisphosphate (5-InsP7), which are important intracellular signaling molecules involved in regulation of phosphate flux. Its function is as follows. (Microbial infection) Receptor for xenotropic and polytropic murine leukemia (X- and P-MLV) retroviruses. Confers susceptibility to X- or P-MLV infection in vitro. The chain is Solute carrier family 53 member 1 from Mus musculus (Mouse).